The chain runs to 154 residues: Hemiasterlin resistant protein 1 (154 aa).

2 disordered regions span residues 1 to 64 (MVRR…PGLM) and 86 to 109 (GMFT…PAGA). Low complexity-rich tracts occupy residues 7-28 (ASPS…SSFA), 48-57 (TPMGAPMGAP), and 96-109 (AEQA…PAGA). Residues 116 to 154 (SQPCEFEWRQFVDCAQNQSDVSLCNGFNDIFKQCKARYA) form the CHCH domain. 2 short sequence motifs (cx9C motif) span residues 119–129 (CEFEWRQFVDC) and 139–149 (CNGFNDIFKQC). Cystine bridges form between cysteine 119–cysteine 149 and cysteine 129–cysteine 139.

This Caenorhabditis elegans protein is Hemiasterlin resistant protein 1 (har-1).